The sequence spans 127 residues: Large ribosomal subunit protein bL20c (127 aa).

The protein belongs to the bacterial ribosomal protein bL20 family.

The protein localises to the plastid. It localises to the chloroplast. Functionally, binds directly to 23S ribosomal RNA and is necessary for the in vitro assembly process of the 50S ribosomal subunit. It is not involved in the protein synthesizing functions of that subunit. The chain is Large ribosomal subunit protein bL20c from Jasminum nudiflorum (Winter jasmine).